The primary structure comprises 107 residues: Flagellar transcriptional regulator FlhD (107 aa).

Belongs to the FlhD family. As to quaternary structure, homodimer; disulfide-linked. Forms a heterohexamer composed of two FlhC and four FlhD subunits. Each FlhC binds a FlhD dimer, forming a heterotrimer, and a hexamer assembles by dimerization of two heterotrimers.

It localises to the cytoplasm. In terms of biological role, functions in complex with FlhC as a master transcriptional regulator that regulates transcription of several flagellar and non-flagellar operons by binding to their promoter region. Activates expression of class 2 flagellar genes, including fliA, which is a flagellum-specific sigma factor that turns on the class 3 genes. Also regulates genes whose products function in a variety of physiological pathways. The polypeptide is Flagellar transcriptional regulator FlhD (Bordetella pertussis (strain Tohama I / ATCC BAA-589 / NCTC 13251)).